The primary structure comprises 1776 residues: TOG array regulator of axonemal microtubules protein 1 (1776 aa).

2 TOG regions span residues 94–311 (EEET…RRLE) and 351–595 (PQEL…MPSS). 8 HEAT repeats span residues 175–212 (AFSLALLPQLVVSLREDNPALRKDALQILHICLRRSSG), 214–246 (VLRTLIQGLESPDARLRASTALLLPILFTPEDL), 250–288 (LDLTEVIISLARKLGDQEMEEESETAFSSLQQIGERLGQ), 344–383 (NLKFEIIPQELHARLLDQEDYKNRTQAVEELKQLLGKFNP), 389–426 (ASLVGFISLLYNLLDDSNFKVVHGTLQVLHLLVIRLGE), 430–465 (QFLGPVIAASVKVLADNKLVIKQEYMKIFLKLMKEV), 466–503 (GPQRVLSLLLENLKHKHSRVREEVVNICICSLLTYPSE), and 505–542 (FDLPKLSFDLAPALVDSKRRVRQAALEAFAVLASSMGS). Disordered stretches follow at residues 655-676 (KNKLPWENEQPGVMGENQTSNS), 817-921 (ILPS…RGIN), 970-1000 (HSSLRSLRNSAAKKRAKLSGSSSTSDVDSPD), and 1062-1084 (TRLSSAKKTSHAAEQSPSAGFTR). 3 stretches are compositionally biased toward polar residues: residues 826-836 (PRTSPKHTSPL), 845-855 (DNSISFSNSWP), and 871-892 (LANQKSSDPTGENFQEKTTAVQ). A compositionally biased stretch (low complexity) spans 988 to 1000 (SGSSSTSDVDSPD). A TOG 3 region spans residues 1259-1481 (DIALTEALRL…YIKESVKNLR (223 aa)). HEAT repeat units lie at residues 1297–1334 (TKLHETTFAVVQEVKNLRSGVSRAAVVCLGDLFTYLKK) and 1338–1375 (QELDSAVRALLHKAGESNTFIREDVDKALKAMVNNVTP). A disordered region spans residues 1493 to 1536 (ASAKGRRSHPGSVGNTRSSSVSRDAFSSSEREVTEVREVPRKSA). Residues 1509 to 1520 (RSSSVSRDAFSS) are compositionally biased toward low complexity. Residues 1521-1533 (SEREVTEVREVPR) show a composition bias toward basic and acidic residues. Positions 1540–1776 (SLESAEYIKV…LLDVTVLSEL (237 aa)) are TOG 4. HEAT repeat units lie at residues 1541-1578 (LESAEYIKVITGLLNAKDFRDRINGIKQLLSDTENNQE), 1582-1619 (GNIVKIFDAFKSRLHDSNSKVNLVALETMHKMIPLLRD), and 1623-1661 (PIINMLIPAIVDNNLNSKNPGIYAAATNVVHALSQHVDN).

Belongs to the Crescerin family. In terms of assembly, interacts with ARMC9. Interacts with CCDC66, CEP104 and CSPP1.

It is found in the cell projection. It localises to the cilium. Its subcellular location is the cytoplasm. The protein localises to the cytoskeleton. The protein resides in the cilium axoneme. Functionally, involved in ciliogenesis. It is required for appropriate acetylation and polyglutamylation of ciliary microtubules, and regulation of cilium length. Interacts with microtubules and promotes microtubule polymerization via its HEAT repeat domains, especially those in TOG region 2 and 4. The polypeptide is TOG array regulator of axonemal microtubules protein 1 (Togaram1) (Mus musculus (Mouse)).